A 359-amino-acid polypeptide reads, in one-letter code: Fructose-bisphosphate aldolase class 2 (359 aa).

Serine 62 lines the D-glyceraldehyde 3-phosphate pocket. Residue aspartate 110 is the Proton donor of the active site. Zn(2+) contacts are provided by histidine 111, aspartate 145, glutamate 175, and histidine 227. Glycine 228 provides a ligand contact to dihydroxyacetone phosphate. A Zn(2+)-binding site is contributed by histidine 265. Residues 266 to 268 (GGS) and 287 to 290 (NIDT) each bind dihydroxyacetone phosphate.

This sequence belongs to the class II fructose-bisphosphate aldolase family. Zn(2+) is required as a cofactor.

It catalyses the reaction beta-D-fructose 1,6-bisphosphate = D-glyceraldehyde 3-phosphate + dihydroxyacetone phosphate. The protein operates within carbohydrate degradation; glycolysis; D-glyceraldehyde 3-phosphate and glycerone phosphate from D-glucose: step 4/4. Its function is as follows. Catalyzes the aldol condensation of dihydroxyacetone phosphate (DHAP or glycerone-phosphate) with glyceraldehyde 3-phosphate (G3P) to form fructose 1,6-bisphosphate (FBP) in gluconeogenesis and the reverse reaction in glycolysis. The protein is Fructose-bisphosphate aldolase class 2 (fbaA) of Buchnera aphidicola subsp. Baizongia pistaciae (strain Bp).